We begin with the raw amino-acid sequence, 785 residues long: DNA ligase (785 aa).

Residues 32 to 36 (DAEYD), 81 to 82 (SL), and E121 contribute to the NAD(+) site. The active-site N6-AMP-lysine intermediate is the K123. NAD(+) is bound by residues R144, E181, K294, and K318. C412, C415, C442, and C448 together coordinate Zn(2+). In terms of domain architecture, BRCT spans 702 to 785 (VEGLPEAGHT…AFLAKHNIPV (84 aa)).

The protein belongs to the NAD-dependent DNA ligase family. LigA subfamily. Requires Mg(2+) as cofactor. Mn(2+) is required as a cofactor.

It carries out the reaction NAD(+) + (deoxyribonucleotide)n-3'-hydroxyl + 5'-phospho-(deoxyribonucleotide)m = (deoxyribonucleotide)n+m + AMP + beta-nicotinamide D-nucleotide.. Its function is as follows. DNA ligase that catalyzes the formation of phosphodiester linkages between 5'-phosphoryl and 3'-hydroxyl groups in double-stranded DNA using NAD as a coenzyme and as the energy source for the reaction. It is essential for DNA replication and repair of damaged DNA. This chain is DNA ligase, found in Pseudomonas fluorescens (strain SBW25).